The chain runs to 199 residues: Dephospho-CoA kinase (199 aa).

Residues 3 to 199 (RIGLTGGIGS…HCKYLQIAQT (197 aa)) form the DPCK domain. Position 11–16 (11–16 (GSGKST)) interacts with ATP.

This sequence belongs to the CoaE family.

The protein resides in the cytoplasm. The catalysed reaction is 3'-dephospho-CoA + ATP = ADP + CoA + H(+). It functions in the pathway cofactor biosynthesis; coenzyme A biosynthesis; CoA from (R)-pantothenate: step 5/5. Functionally, catalyzes the phosphorylation of the 3'-hydroxyl group of dephosphocoenzyme A to form coenzyme A. This is Dephospho-CoA kinase from Coxiella burnetii (strain RSA 493 / Nine Mile phase I).